A 563-amino-acid chain; its full sequence is Zinc finger CCHC domain-containing protein 7 (563 aa).

2 disordered regions span residues Ser-41–Ala-64 and Ser-133–Ser-157. Residues Ser-133 to Pro-142 are compositionally biased toward polar residues. Residues Gln-143–Ser-157 are compositionally biased toward low complexity. 5 CCHC-type zinc fingers span residues Val-265 to Val-282, Pro-287 to Ser-304, Arg-305 to Glu-322, Lys-328 to Glu-345, and Val-372 to Glu-389. The interval Lys-443–Asp-494 is disordered. Positions Pro-449–Arg-463 are enriched in basic residues. A compositionally biased stretch (basic and acidic residues) spans Lys-464–Lys-476. The span at Gln-477–Ser-486 shows a compositional bias: basic residues.

Component of a nucleolar TRAMP-like complex, an ATP-dependent exosome regulatory complex consisting of a helicase (MTREX), an oligadenylate polymerase (PAPD5 or PAPD7), and a substrate specific RNA-binding factor (ZCCHC7 or ZCCHC8). Several TRAMP-like complexes exist with specific compositions and are associated with nuclear, or nucleolar RNA exosomes.

Its subcellular location is the nucleus. The protein resides in the nucleolus. In Xenopus laevis (African clawed frog), this protein is Zinc finger CCHC domain-containing protein 7 (zcchc7).